Consider the following 196-residue polypeptide: Holliday junction branch migration complex subunit RuvA (196 aa).

The tract at residues Met1–His65 is domain I. A domain II region spans residues Asp66–Gly140. The segment at Gly140–Lys144 is flexible linker. Residues Ala145–Ser196 are domain III.

This sequence belongs to the RuvA family. As to quaternary structure, homotetramer. Forms an RuvA(8)-RuvB(12)-Holliday junction (HJ) complex. HJ DNA is sandwiched between 2 RuvA tetramers; dsDNA enters through RuvA and exits via RuvB. An RuvB hexamer assembles on each DNA strand where it exits the tetramer. Each RuvB hexamer is contacted by two RuvA subunits (via domain III) on 2 adjacent RuvB subunits; this complex drives branch migration. In the full resolvosome a probable DNA-RuvA(4)-RuvB(12)-RuvC(2) complex forms which resolves the HJ.

The protein localises to the cytoplasm. The RuvA-RuvB-RuvC complex processes Holliday junction (HJ) DNA during genetic recombination and DNA repair, while the RuvA-RuvB complex plays an important role in the rescue of blocked DNA replication forks via replication fork reversal (RFR). RuvA specifically binds to HJ cruciform DNA, conferring on it an open structure. The RuvB hexamer acts as an ATP-dependent pump, pulling dsDNA into and through the RuvAB complex. HJ branch migration allows RuvC to scan DNA until it finds its consensus sequence, where it cleaves and resolves the cruciform DNA. The polypeptide is Holliday junction branch migration complex subunit RuvA (Bdellovibrio bacteriovorus (strain ATCC 15356 / DSM 50701 / NCIMB 9529 / HD100)).